The primary structure comprises 875 residues: Alanine--tRNA ligase (875 aa).

The Zn(2+) site is built by histidine 563, histidine 567, cysteine 665, and histidine 669.

The protein belongs to the class-II aminoacyl-tRNA synthetase family. The cofactor is Zn(2+).

Its subcellular location is the cytoplasm. It catalyses the reaction tRNA(Ala) + L-alanine + ATP = L-alanyl-tRNA(Ala) + AMP + diphosphate. Catalyzes the attachment of alanine to tRNA(Ala) in a two-step reaction: alanine is first activated by ATP to form Ala-AMP and then transferred to the acceptor end of tRNA(Ala). Also edits incorrectly charged Ser-tRNA(Ala) and Gly-tRNA(Ala) via its editing domain. The sequence is that of Alanine--tRNA ligase from Desulfitobacterium hafniense (strain Y51).